The primary structure comprises 620 residues: Long-chain fatty acid transport protein 2 (620 aa).

At 1–4 (MLSA) the chain is on the lumenal side. Residues 5-27 (IYTVLAGLLFLPLLVNLCCPYFF) form a helical membrane-spanning segment. At 28-106 (QDIGYFLKVA…DHLGLRQGDC (79 aa)) the chain is on the cytoplasmic side. A helical transmembrane segment spans residues 107 to 127 (VALLMGNEPAYVWLWLGLVKL). Over 128–261 (GCAMACLNYN…SGLKADDVIY (134 aa)) the chain is Lumenal. Residue 222–233 (YIYTSGTTGLPK) participates in AMP binding. The chain crosses the membrane as a helical span at residues 262–282 (ITLPFYHSAALLIGIHGCIVA). The Cytoplasmic portion of the chain corresponds to 283 to 620 (GATLALRTKF…NAISAKTLKL (338 aa)). At Lys-291 the chain carries N6-acetyllysine. The residue at position 577 (Thr-577) is a Phosphothreonine.

The protein belongs to the ATP-dependent AMP-binding enzyme family. Expressed in liver, kidney, placenta, intestine, brain, heart, and colon. Predominantly expressed in liver. As to expression, expressed in liver, placenta, and intestine, but much lower relative to isoform 1.

The protein resides in the endoplasmic reticulum membrane. It is found in the peroxisome membrane. Its subcellular location is the cell membrane. The protein localises to the microsome. The catalysed reaction is a fatty acid(in) = a fatty acid(out). The enzyme catalyses (9Z)-octadecenoate(out) = (9Z)-octadecenoate(in). It catalyses the reaction a long-chain fatty acid + ATP + CoA = a long-chain fatty acyl-CoA + AMP + diphosphate. It carries out the reaction (5Z,8Z,11Z,14Z)-eicosatetraenoate + ATP + CoA = (5Z,8Z,11Z,14Z)-eicosatetraenoyl-CoA + AMP + diphosphate. The catalysed reaction is hexadecanoate + ATP + CoA = hexadecanoyl-CoA + AMP + diphosphate. The enzyme catalyses (9Z)-octadecenoate + ATP + CoA = (9Z)-octadecenoyl-CoA + AMP + diphosphate. It catalyses the reaction 3,7,11,15-tetramethylhexadecanoate + ATP + CoA = phytanoyl-CoA + AMP + diphosphate. It carries out the reaction (9Z,12Z,15Z)-octadecatrienoate + ATP + CoA = (9Z,12Z,15Z)-octadecatrienoyl-CoA + AMP + diphosphate. The catalysed reaction is 2,6,10,14-tetramethylpentadecanoate + ATP + CoA = pristanoyl-CoA + AMP + diphosphate. The enzyme catalyses (E)-hexadec-2-enoate + ATP + CoA = (2E)-hexadecenoyl-CoA + AMP + diphosphate. It catalyses the reaction a very long-chain fatty acid + ATP + CoA = a very long-chain fatty acyl-CoA + AMP + diphosphate. It carries out the reaction tetracosanoate + ATP + CoA = tetracosanoyl-CoA + AMP + diphosphate. The catalysed reaction is (4Z,7Z,10Z,13Z,16Z,19Z)-docosahexaenoate + ATP + CoA = (4Z,7Z,10Z,13Z,16Z,19Z)-docosahexaenoyl-CoA + AMP + diphosphate. The enzyme catalyses (25R)-3alpha,7alpha,12alpha-trihydroxy-5beta-cholestan-26-oate + ATP + CoA = (25R)-3alpha,7alpha,12alpha-trihydroxy-5beta-cholestan-26-oyl-CoA + AMP + diphosphate. Functionally, mediates the import of long-chain fatty acids (LCFA) into the cell by facilitating their transport across cell membranes, playing an important role in hepatic fatty acid uptake. Also functions as an acyl-CoA ligase catalyzing the ATP-dependent formation of fatty acyl-CoA using LCFA and very-long-chain fatty acids (VLCFA) as substrates, which prevents fatty acid efflux from cells and might drive more fatty acid uptake. Plays a pivotal role in regulating available LCFA substrates from exogenous sources in tissues undergoing high levels of beta-oxidation or triglyceride synthesis. Can also activate branched-chain fatty acids such as phytanic acid and pristanic acid. May contribute to the synthesis of sphingosine-1-phosphate. Does not activate C24 bile acids, cholate and chenodeoxycholate. In vitro, activates 3-alpha,7-alpha,12-alpha-trihydroxy-5-beta-cholestanate (THCA), the C27 precursor of cholic acid deriving from the de novo synthesis from cholesterol. However, it is not critical for THCA activation and bile synthesis in vivo. Its function is as follows. Exhibits both long-chain fatty acids (LCFA) transport activity and acyl CoA synthetase towards very long-chain fatty acids. Shows a preference for generating CoA derivatives of n-3 fatty acids, which are preferentially trafficked into phosphatidylinositol. In terms of biological role, exhibits long-chain fatty acids (LCFA) transport activity but lacks acyl CoA synthetase towards very long-chain fatty acids. This chain is Long-chain fatty acid transport protein 2 (SLC27A2), found in Homo sapiens (Human).